Reading from the N-terminus, the 437-residue chain is Elongation factor 1-gamma (437 aa).

An N-acetylalanine modification is found at Ala-2. Residues 2–87 (AAGTLYTYPE…YVSNEELRGS (86 aa)) form the GST N-terminal domain. Residues 88–216 (TPEAAAQVVQ…VKLCEKMAQF (129 aa)) enclose the GST C-terminal domain. 2 positions are modified to N6-acetyllysine: Lys-147 and Lys-212. The segment covering 221–254 (FAESQPKKDTPRKEKGSREEKQKPQAERKEEKKA) has biased composition (basic and acidic residues). Residues 221 to 268 (FAESQPKKDTPRKEKGSREEKQKPQAERKEEKKAAAPAPEEEMDECEQ) form a disordered region. Lys-253 is covalently cross-linked (Glycyl lysine isopeptide (Lys-Gly) (interchain with G-Cter in SUMO1)). One can recognise an EF-1-gamma C-terminal domain in the interval 276–437 (AKDPFAHLPK…KAVNQGKIFK (162 aa)). Lys-285 is covalently cross-linked (Glycyl lysine isopeptide (Lys-Gly) (interchain with G-Cter in SUMO2)). N6-acetyllysine is present on Lys-401. Lys-434 bears the N6-acetyllysine; alternate mark. Lys-434 is subject to N6-malonyllysine; alternate.

EF-1 is composed of four subunits: alpha, beta, delta, and gamma.

Its function is as follows. Probably plays a role in anchoring the complex to other cellular components. The polypeptide is Elongation factor 1-gamma (Eef1g) (Mus musculus (Mouse)).